The primary structure comprises 387 residues: Succinate--CoA ligase [ADP-forming] subunit beta (387 aa).

The region spanning 9–236 (KELFAKHNVP…RAATDPLELK (228 aa)) is the ATP-grasp domain. ATP-binding positions include lysine 45, 52–54 (GRG), serine 94, and glutamate 99. Mg(2+) contacts are provided by asparagine 191 and aspartate 205. Substrate is bound by residues asparagine 256 and 318–320 (GIT).

This sequence belongs to the succinate/malate CoA ligase beta subunit family. In terms of assembly, heterotetramer of two alpha and two beta subunits. The cofactor is Mg(2+).

The catalysed reaction is succinate + ATP + CoA = succinyl-CoA + ADP + phosphate. It carries out the reaction GTP + succinate + CoA = succinyl-CoA + GDP + phosphate. The protein operates within carbohydrate metabolism; tricarboxylic acid cycle; succinate from succinyl-CoA (ligase route): step 1/1. Its function is as follows. Succinyl-CoA synthetase functions in the citric acid cycle (TCA), coupling the hydrolysis of succinyl-CoA to the synthesis of either ATP or GTP and thus represents the only step of substrate-level phosphorylation in the TCA. The beta subunit provides nucleotide specificity of the enzyme and binds the substrate succinate, while the binding sites for coenzyme A and phosphate are found in the alpha subunit. This chain is Succinate--CoA ligase [ADP-forming] subunit beta, found in Mycobacterium tuberculosis (strain CDC 1551 / Oshkosh).